Reading from the N-terminus, the 173-residue chain is Crossover junction endodeoxyribonuclease RuvC (173 aa).

Active-site residues include Asp-8, Glu-67, and Asp-139. Mg(2+) is bound by residues Asp-8, Glu-67, and Asp-139.

It belongs to the RuvC family. In terms of assembly, homodimer which binds Holliday junction (HJ) DNA. The HJ becomes 2-fold symmetrical on binding to RuvC with unstacked arms; it has a different conformation from HJ DNA in complex with RuvA. In the full resolvosome a probable DNA-RuvA(4)-RuvB(12)-RuvC(2) complex forms which resolves the HJ. Mg(2+) is required as a cofactor.

Its subcellular location is the cytoplasm. It catalyses the reaction Endonucleolytic cleavage at a junction such as a reciprocal single-stranded crossover between two homologous DNA duplexes (Holliday junction).. In terms of biological role, the RuvA-RuvB-RuvC complex processes Holliday junction (HJ) DNA during genetic recombination and DNA repair. Endonuclease that resolves HJ intermediates. Cleaves cruciform DNA by making single-stranded nicks across the HJ at symmetrical positions within the homologous arms, yielding a 5'-phosphate and a 3'-hydroxyl group; requires a central core of homology in the junction. The consensus cleavage sequence is 5'-(A/T)TT(C/G)-3'. Cleavage occurs on the 3'-side of the TT dinucleotide at the point of strand exchange. HJ branch migration catalyzed by RuvA-RuvB allows RuvC to scan DNA until it finds its consensus sequence, where it cleaves and resolves the cruciform DNA. This Shewanella piezotolerans (strain WP3 / JCM 13877) protein is Crossover junction endodeoxyribonuclease RuvC.